The primary structure comprises 698 residues: Trafficking protein particle complex III-specific subunit 85 (698 aa).

Disordered stretches follow at residues 82–125 and 678–698; these read VGQH…LFQR and VDSAPRPSEKNLTRTSVSFIG. Positions 678–689 are enriched in basic and acidic residues; that stretch reads VDSAPRPSEKNL.

The protein belongs to the TRS85 family. In terms of assembly, part of the multisubunit TRAPP (transport protein particle) III complex composed of BET3, BET5, TRS20, TRS23, TRS31, TRS33 and TRS85.

The protein resides in the preautophagosomal structure. Specific subunit of the TRAPP III complex that acts as an autophagy-specific guanine nucleotide exchange factor (GEF) for YPT1. TRS85 directs the TRAPP III complex to the phagophore assembly site (PAS) that is involved in autophagosome formation. Required for membrane expansion during autophagy and the CVT pathway. Required for sporulation. Has a role late in meiosis following DNA replication. The chain is Trafficking protein particle complex III-specific subunit 85 (TRS85) from Saccharomyces cerevisiae (strain ATCC 204508 / S288c) (Baker's yeast).